Consider the following 401-residue polypeptide: Adenosine 3'-phospho 5'-phosphosulfate transporter 2 (401 aa).

2 N-linked (GlcNAc...) asparagine glycosylation sites follow: N12 and N71. 6 consecutive transmembrane segments (helical) span residues 78-98 (LTQF…YGYL), 114-134 (YLTL…LQLI), 147-167 (MIIA…LGYL), 170-190 (PTQV…GVFI), 196-216 (NVAD…FTLA), and 223-243 (NFNL…AVIG). N-linked (GlcNAc...) asparagine glycosylation occurs at N254. Transmembrane regions (helical) follow at residues 267–287 (IGFV…PAVT), 298–317 (GYAF…VLAL), 324–346 (LIAV…IFFA), and 349–369 (FTFQ…LNVY).

Belongs to the nucleotide-sugar transporter family. SLC35B subfamily. Preferentially and highly expressed in colon.

It is found in the golgi apparatus membrane. It catalyses the reaction 3'-phosphoadenylyl sulfate(in) + adenosine 3',5'-bisphosphate(out) = 3'-phosphoadenylyl sulfate(out) + adenosine 3',5'-bisphosphate(in). Its function is as follows. Probably functions as a 3'-phosphoadenylyl sulfate:adenosine 3',5'-bisphosphate antiporter at the Golgi membranes. Mediates the transport from the cytosol into the lumen of the Golgi of 3'-phosphoadenylyl sulfate/adenosine 3'-phospho 5'-phosphosulfate (PAPS), a universal sulfuryl donor for sulfation events that take place in that compartment. This Homo sapiens (Human) protein is Adenosine 3'-phospho 5'-phosphosulfate transporter 2.